A 389-amino-acid polypeptide reads, in one-letter code: MADGSKVFKKTSPDGKITVYLAKRDYVDHVEFVEPVDGMIVIDPEYQKEKKVFVTMTCAFRYGRDDMELIGLSFRKDIYVQSCQVHPPLPGEKKALTPLQEKLKAKLGANAFPFSFNMATNLPCSVTLQPGPEDSGKACGVDFEVKGFWGDDVEEKVSKKNVARLIIRKVQYAPETAGAAPHAEITKQFMMSDKPLQLEASLNKEIHYHGEPIIVNVKINNSTNKIVKKIKITVEQITDVVLYSLDKYTKVVCCEEMNDTVAANSAFTKAYQVTPLLANNTEKRGLALDGKLKHGDTNLASSTTLRPGMDKEVMGILVSYKIRVNLMASRGGILGDLISSDVSVELPLILMHPKPAEGTTSAEDVVIEEFARQKLQGEQDDDEDKEEAS.

Belongs to the arrestin family. Retina and pineal gland.

Its function is as follows. May play a role in an as yet undefined retina-specific signal transduction. Could bind to photoactivated-phosphorylated red/green opsins. The chain is Arrestin-C (arr3) from Lithobates pipiens (Northern leopard frog).